Reading from the N-terminus, the 1335-residue chain is Bifunctional autolysin (1335 aa).

Residues 1-29 (MAKKFNYKLPSMVALTLFGTAFTAHQANA) form the signal peptide. Disordered stretches follow at residues 51-88 (QAEK…QSTT), 100-262 (NEIS…KYKE), and 514-535 (WGTT…NNKL). Polar residues-rich tracts occupy residues 58–88 (EVTQ…QSTT), 100–127 (NEIS…VTKN), 143–155 (TDTN…QSVA), 176–223 (TASQ…NASG), and 244–258 (SLNN…TTSY). Positions 303–863 (VSSQKTSSLP…LSTQSTPAPK (561 aa)) are N-acetylmuramoyl-L-alanine amidase. Residues 515 to 531 (GTTSTKPSQPSKPSGGT) show a composition bias toward low complexity. GW domains follow at residues 533–610 (NKLT…YNTA), 612–686 (APVK…TASK), 700–774 (TVTN…YNTA), 776–850 (SPVK…APSK), 868–943 (STQT…TQNI), 945–1020 (KQTQ…QNST), and 1023–1096 (QSTP…KEKI). Positions 864 to 1335 (QVKPSTQTVN…GKYFEIPIYK (472 aa)) are endo-beta-N-acetylglucosaminidase.

This sequence in the N-terminal section; belongs to the N-acetylmuramoyl-L-alanine amidase 2 family. In the C-terminal section; belongs to the glycosyl hydrolase 73 family. In terms of assembly, oligomer; forms a ring structure at the cell surface which is important for efficient partitioning of daughter cells after cell division. Undergoes proteolytic processing to generate the two extracellular lytic enzymes, probably at the septal region on the cell surface.

Its subcellular location is the secreted. The catalysed reaction is Hydrolyzes the link between N-acetylmuramoyl residues and L-amino acid residues in certain cell-wall glycopeptides.. The enzyme catalyses an N(4)-(oligosaccharide-(1-&gt;3)-[oligosaccharide-(1-&gt;6)]-beta-D-Man-(1-&gt;4)-beta-D-GlcNAc-(1-&gt;4)-alpha-D-GlcNAc)-L-asparaginyl-[protein] + H2O = an oligosaccharide-(1-&gt;3)-[oligosaccharide-(1-&gt;6)]-beta-D-Man-(1-&gt;4)-D-GlcNAc + N(4)-(N-acetyl-beta-D-glucosaminyl)-L-asparaginyl-[protein]. In terms of biological role, endohydrolysis of the di-N-acetylchitobiosyl unit in high-mannose glycopeptides and glycoproteins containing the -[(Man)5(GlcNAc)2]-Asn structure. One N-acetyl-D-glucosamine residue remains attached to the protein; the rest of the oligosaccharide is released intact. Cleaves the peptidoglycan connecting the daughter cells at the end of the cell division cycle, resulting in the separation of the two newly divided cells. Acts as an autolysin in penicillin-induced lysis. The sequence is that of Bifunctional autolysin (atl) from Staphylococcus epidermidis (strain ATCC 12228 / FDA PCI 1200).